Here is an 864-residue protein sequence, read N- to C-terminus: Leucine--tRNA ligase (864 aa).

A 'HIGH' region motif is present at residues 42-52 (PYPSGKLHMGH). Residues 624-628 (KMSKS) carry the 'KMSKS' region motif. Lysine 627 is a binding site for ATP.

This sequence belongs to the class-I aminoacyl-tRNA synthetase family.

Its subcellular location is the cytoplasm. The enzyme catalyses tRNA(Leu) + L-leucine + ATP = L-leucyl-tRNA(Leu) + AMP + diphosphate. In Burkholderia mallei (strain ATCC 23344), this protein is Leucine--tRNA ligase.